The primary structure comprises 160 residues: SsrA-binding protein (160 aa).

A compositionally biased stretch (basic and acidic residues) spans 138–148 (KRDDIKDREWQ). Residues 138-160 (KRDDIKDREWQTAKSRIMKHANR) are disordered.

The protein belongs to the SmpB family.

It localises to the cytoplasm. Functionally, required for rescue of stalled ribosomes mediated by trans-translation. Binds to transfer-messenger RNA (tmRNA), required for stable association of tmRNA with ribosomes. tmRNA and SmpB together mimic tRNA shape, replacing the anticodon stem-loop with SmpB. tmRNA is encoded by the ssrA gene; the 2 termini fold to resemble tRNA(Ala) and it encodes a 'tag peptide', a short internal open reading frame. During trans-translation Ala-aminoacylated tmRNA acts like a tRNA, entering the A-site of stalled ribosomes, displacing the stalled mRNA. The ribosome then switches to translate the ORF on the tmRNA; the nascent peptide is terminated with the 'tag peptide' encoded by the tmRNA and targeted for degradation. The ribosome is freed to recommence translation, which seems to be the essential function of trans-translation. In Serratia proteamaculans (strain 568), this protein is SsrA-binding protein.